A 131-amino-acid polypeptide reads, in one-letter code: Glycine cleavage system H protein (131 aa).

The region spanning 24 to 106 is the Lipoyl-binding domain; the sequence is IATIGISAFA…YGEGWLLKLR (83 aa). K65 bears the N6-lipoyllysine mark.

Belongs to the GcvH family. The glycine cleavage system is composed of four proteins: P, T, L and H. Requires (R)-lipoate as cofactor.

Functionally, the glycine cleavage system catalyzes the degradation of glycine. The H protein shuttles the methylamine group of glycine from the P protein to the T protein. The protein is Glycine cleavage system H protein of Gloeothece citriformis (strain PCC 7424) (Cyanothece sp. (strain PCC 7424)).